Reading from the N-terminus, the 184-residue chain is Photosystem I assembly protein Ycf4 (184 aa).

Transmembrane regions (helical) follow at residues Trp-24–Ile-44 and Ile-57–Ser-77.

The protein belongs to the Ycf4 family.

Its subcellular location is the plastid. The protein resides in the chloroplast thylakoid membrane. Its function is as follows. Seems to be required for the assembly of the photosystem I complex. The chain is Photosystem I assembly protein Ycf4 from Buxus microphylla (Littleleaf boxwood).